A 203-amino-acid polypeptide reads, in one-letter code: Small ribosomal subunit protein uS4c (203 aa).

Residues 92–150 (MRLDNIIYRLGMAPTIANARQLVNHGHIVVNDRIVTIPSYRCKPKDIISVRNNSTSRNV) enclose the S4 RNA-binding domain.

This sequence belongs to the universal ribosomal protein uS4 family. In terms of assembly, part of the 30S ribosomal subunit. Contacts protein S5. The interaction surface between S4 and S5 is involved in control of translational fidelity.

It localises to the plastid. The protein resides in the chloroplast. Functionally, one of the primary rRNA binding proteins, it binds directly to 16S rRNA where it nucleates assembly of the body of the 30S subunit. Its function is as follows. With S5 and S12 plays an important role in translational accuracy. The polypeptide is Small ribosomal subunit protein uS4c (rps4) (Chlorokybus atmophyticus (Soil alga)).